The sequence spans 481 residues: 2-succinylbenzoate--CoA ligase (481 aa).

It belongs to the ATP-dependent AMP-binding enzyme family. MenE subfamily.

It carries out the reaction 2-succinylbenzoate + ATP + CoA = 2-succinylbenzoyl-CoA + AMP + diphosphate. The protein operates within quinol/quinone metabolism; 1,4-dihydroxy-2-naphthoate biosynthesis; 1,4-dihydroxy-2-naphthoate from chorismate: step 5/7. Its pathway is quinol/quinone metabolism; menaquinone biosynthesis. In terms of biological role, converts 2-succinylbenzoate (OSB) to 2-succinylbenzoyl-CoA (OSB-CoA). This chain is 2-succinylbenzoate--CoA ligase, found in Bacillus cereus (strain ATCC 10987 / NRS 248).